Here is a 348-residue protein sequence, read N- to C-terminus: MDDKWRESAPVNDIEASSWIRIFRAFDTDHDGLIQCEEMQKTIRDSTYSFGFDHYELQKMSLYLEMREGKPVDFADFCYLMSKCKGYRLREYLFRAALTVTPKNQRIHVFSELQRYKCVPPPIFLIFLSIVQLAFYLYYVVDSSEGVWLSGPIPTMSPLIVSQYHLPELWRLFTYCLINVGIFHIIFNILIQLAIGVPLELVHRWRIYILYFMGVLFGSILSLALDPTVFLCGGAAGSFSLIASHITTIATNFKEMENATCRLPILIVFAALDYVLAVYQRFFAPRIDKVSMYGHLGGLVAGILFTFILFRGSKPSRFYTVSFWVSLVLSGFFIAICITLIAAPSMLH.

Residues I14–S49 enclose the EF-hand domain. Residues D27, D29, D31, and E38 each coordinate Ca(2+). Helical transmembrane passes span P121–V141, L177–V197, I207–P227, V229–I249, L263–F283, V290–F310, and F323–A343.

The protein belongs to the peptidase S54 family.

It localises to the membrane. In terms of biological role, probable inactive serine protease. The sequence is that of Inactive rhomboid-related protein 2 from Caenorhabditis elegans.